Here is a 424-residue protein sequence, read N- to C-terminus: Dual-specificity RNA methyltransferase RlmN (424 aa).

The Proton acceptor role is filled by glutamate 132. Residues 138–388 (GPDRGTLCVS…VRTPRGRDIL (251 aa)) enclose the Radical SAM core domain. A disulfide bridge links cysteine 145 with cysteine 391. Cysteine 152, cysteine 156, and cysteine 159 together coordinate [4Fe-4S] cluster. Residues 217 to 218 (GE), serine 249, 271 to 273 (SLH), and asparagine 348 contribute to the S-adenosyl-L-methionine site. Cysteine 391 functions as the S-methylcysteine intermediate in the catalytic mechanism.

The protein belongs to the radical SAM superfamily. RlmN family. It depends on [4Fe-4S] cluster as a cofactor.

The protein resides in the cytoplasm. It carries out the reaction adenosine(2503) in 23S rRNA + 2 reduced [2Fe-2S]-[ferredoxin] + 2 S-adenosyl-L-methionine = 2-methyladenosine(2503) in 23S rRNA + 5'-deoxyadenosine + L-methionine + 2 oxidized [2Fe-2S]-[ferredoxin] + S-adenosyl-L-homocysteine. The catalysed reaction is adenosine(37) in tRNA + 2 reduced [2Fe-2S]-[ferredoxin] + 2 S-adenosyl-L-methionine = 2-methyladenosine(37) in tRNA + 5'-deoxyadenosine + L-methionine + 2 oxidized [2Fe-2S]-[ferredoxin] + S-adenosyl-L-homocysteine. Functionally, specifically methylates position 2 of adenine 2503 in 23S rRNA and position 2 of adenine 37 in tRNAs. m2A2503 modification seems to play a crucial role in the proofreading step occurring at the peptidyl transferase center and thus would serve to optimize ribosomal fidelity. The sequence is that of Dual-specificity RNA methyltransferase RlmN from Methylobacterium radiotolerans (strain ATCC 27329 / DSM 1819 / JCM 2831 / NBRC 15690 / NCIMB 10815 / 0-1).